A 355-amino-acid polypeptide reads, in one-letter code: F-box only protein 32 (355 aa).

A Nuclear localization signal motif is present at residues Lys-62–Asp-67. Positions Leu-169–Leu-173 match the Nuclear export signal motif. Residues Leu-223–Gln-271 enclose the F-box domain. Residues Arg-280–Lys-295 carry the Bipartite nuclear localization signal motif.

Part of the SCF (SKP1-CUL1-F-box) E3 ubiquitin-protein ligase complex SCF(FBXO32) formed of CUL1, SKP1, RBX1 and FBXO32.

It localises to the cytoplasm. Its subcellular location is the nucleus. It participates in protein modification; protein ubiquitination. Its function is as follows. Substrate recognition component of a SCF (SKP1-CUL1-F-box protein) E3 ubiquitin-protein ligase complex which mediates the ubiquitination and subsequent proteasomal degradation of target proteins. Probably recognizes and binds to phosphorylated target proteins during skeletal muscle atrophy. Recognizes TERF1. This Bos taurus (Bovine) protein is F-box only protein 32 (FBXO32).